Reading from the N-terminus, the 792-residue chain is DEAD-box ATP-dependent RNA helicase 40 (792 aa).

The segment covering 1 to 16 (MSAGTAPAAPRYAPDD) has biased composition (low complexity). 2 disordered regions span residues 1–25 (MSAGTAPAAPRYAPDDPSLPKPWRG) and 44–118 (TQYE…PLPA). A WW domain is found at 17–51 (PSLPKPWRGLVDGTTGYLYYWNPETNITQYEKPLP). Positions 52–68 (PEDQLPPPPPLPPPPPR) are enriched in pro residues. 2 stretches are compositionally biased toward basic and acidic residues: residues 70–80 (GRGDRDRDRRD) and 88–108 (PRRDHRDRDRDRDRRHDDHRS). The Q motif motif lies at 150 to 178 (TSFETGGFPPEILKEIQRAGFSSPTPIQA). The Helicase ATP-binding domain occupies 181–355 (WPIALQCQDV…EDLLVHPVQV (175 aa)). ATP is bound at residue 194–201 (AKTGSGKT). Residues 303 to 306 (DEAD) carry the DEAD box motif. A Helicase C-terminal domain is found at 384-528 (RLEQILRSQD…RVPRDLADMA (145 aa)). The tract at residues 523–792 (DLADMASRGG…NATVQNGGDN (270 aa)) is disordered. 2 stretches are compositionally biased toward basic and acidic residues: residues 543-560 (TRSDRGGSHSELDSRYGG) and 572-588 (DSSRSSRRHDYGDDGRS). 2 stretches are compositionally biased toward basic residues: residues 589–599 (RRSGRGRSRSR) and 609–654 (RSPK…RRHE). Residues 668–708 (GHGERKRTPEADPSRNHTNHSDPKDDRHPEDGKVGKVDLDR) show a composition bias toward basic and acidic residues. Residues 725-739 (GKTSRSVSPGNQVEG) show a composition bias toward polar residues. The segment covering 764–777 (DEEEGMIDEDGEIA) has biased composition (acidic residues).

It belongs to the DEAD box helicase family. DDX5/DBP2 subfamily.

It localises to the nucleus. It carries out the reaction ATP + H2O = ADP + phosphate + H(+). ATP-dependent RNA helicase involved nonsense-mediated mRNA decay and ribosome biogenesis through rRNA processing. In Oryza sativa subsp. japonica (Rice), this protein is DEAD-box ATP-dependent RNA helicase 40.